Here is a 141-residue protein sequence, read N- to C-terminus: Cystatin-S (141 aa).

The signal sequence occupies residues 1–20 (MARPLCTLLLLMATLAGALA). A phosphoserine mark is found at serine 21 and serine 23. Residues 76–80 (QTFGG) carry the Secondary area of contact motif. Disulfide bonds link cysteine 94–cysteine 104 and cysteine 118–cysteine 138.

Belongs to the cystatin family. Post-translationally, phosphorylated at both its N- and C-terminal regions. As to expression, expressed in submandibular and sublingual saliva but not in parotid saliva (at protein level). Expressed in saliva, tears, urine and seminal fluid.

Its subcellular location is the secreted. In terms of biological role, this protein strongly inhibits papain and ficin, partially inhibits stem bromelain and bovine cathepsin C, but does not inhibit porcine cathepsin B or clostripain. Papain is inhibited non-competitively. In Homo sapiens (Human), this protein is Cystatin-S (CST4).